The chain runs to 510 residues: NAD(P)H-quinone oxidoreductase subunit 2 A, chloroplastic (510 aa).

13 helical membrane passes run 31 to 51 (FIFP…IDLT), 57 to 77 (TPWL…ALLF), 99 to 119 (IFQF…VEYI), 124 to 144 (MAIT…MFLC), 149 to 169 (LITI…LSGY), 183 to 203 (YLLM…WLYG), 229 to 249 (ISIA…PAPF), 295 to 315 (WHLL…LIAI), 323 to 343 (MLAY…IVGD), 354 to 374 (YMLF…LFGL), 395 to 415 (ALSS…AGFF), 418 to 438 (LYLF…IGLL), and 484 to 504 (MIVC…IIAI).

Belongs to the complex I subunit 2 family. In terms of assembly, NDH is composed of at least 16 different subunits, 5 of which are encoded in the nucleus.

It is found in the plastid. Its subcellular location is the chloroplast thylakoid membrane. It catalyses the reaction a plastoquinone + NADH + (n+1) H(+)(in) = a plastoquinol + NAD(+) + n H(+)(out). It carries out the reaction a plastoquinone + NADPH + (n+1) H(+)(in) = a plastoquinol + NADP(+) + n H(+)(out). Functionally, NDH shuttles electrons from NAD(P)H:plastoquinone, via FMN and iron-sulfur (Fe-S) centers, to quinones in the photosynthetic chain and possibly in a chloroplast respiratory chain. The immediate electron acceptor for the enzyme in this species is believed to be plastoquinone. Couples the redox reaction to proton translocation, and thus conserves the redox energy in a proton gradient. This chain is NAD(P)H-quinone oxidoreductase subunit 2 A, chloroplastic, found in Nymphaea alba (White water-lily).